Consider the following 574-residue polypeptide: Glutamyl-tRNA(Gln) amidotransferase subunit B, mitochondrial (574 aa).

A mitochondrion-targeting transit peptide spans 1 to 12 (MIRQFVSHRGIP). The disordered stretch occupies residues 34–62 (PLGRKNWSTSDEAKSKRAAMRKGGAPPPE).

It belongs to the GatB/GatE family. GatB subfamily. As to quaternary structure, subunit of the heterotrimeric GatCAB amidotransferase (AdT) complex, composed of A, B and C subunits.

It localises to the mitochondrion. It carries out the reaction L-glutamyl-tRNA(Gln) + L-glutamine + ATP + H2O = L-glutaminyl-tRNA(Gln) + L-glutamate + ADP + phosphate + H(+). Functionally, allows the formation of correctly charged Gln-tRNA(Gln) through the transamidation of misacylated Glu-tRNA(Gln) in the mitochondria. The reaction takes place in the presence of glutamine and ATP through an activated gamma-phospho-Glu-tRNA(Gln). This is Glutamyl-tRNA(Gln) amidotransferase subunit B, mitochondrial from Ajellomyces capsulatus (strain H143) (Darling's disease fungus).